The chain runs to 287 residues: Viomycin phosphotransferase (287 aa).

Aspartate 190 (proton acceptor) is an active-site residue.

Belongs to the aminoglycoside phosphotransferase family.

It catalyses the reaction viomycin + ATP = O-phosphoviomycin + ADP + H(+). Functionally, the aminoglycoside phosphotransferases achieve inactivation of their antibiotic substrates by phosphorylation. The chain is Viomycin phosphotransferase (vph) from Streptomyces vinaceus.